We begin with the raw amino-acid sequence, 217 residues long: UPF0502 protein Sfri_1696 (217 aa).

Belongs to the UPF0502 family.

The polypeptide is UPF0502 protein Sfri_1696 (Shewanella frigidimarina (strain NCIMB 400)).